The primary structure comprises 455 residues: Probable glycine dehydrogenase (decarboxylating) subunit 1 (455 aa).

Belongs to the GcvP family. N-terminal subunit subfamily. The glycine cleavage system is composed of four proteins: P, T, L and H. In this organism, the P 'protein' is a heterodimer of two subunits.

It carries out the reaction N(6)-[(R)-lipoyl]-L-lysyl-[glycine-cleavage complex H protein] + glycine + H(+) = N(6)-[(R)-S(8)-aminomethyldihydrolipoyl]-L-lysyl-[glycine-cleavage complex H protein] + CO2. Functionally, the glycine cleavage system catalyzes the degradation of glycine. The P protein binds the alpha-amino group of glycine through its pyridoxal phosphate cofactor; CO(2) is released and the remaining methylamine moiety is then transferred to the lipoamide cofactor of the H protein. This is Probable glycine dehydrogenase (decarboxylating) subunit 1 from Saccharolobus solfataricus (strain ATCC 35092 / DSM 1617 / JCM 11322 / P2) (Sulfolobus solfataricus).